Reading from the N-terminus, the 463-residue chain is Peptidylprolyl isomerase cyp7 (463 aa).

The region spanning 11 to 166 (ATGTVILKTT…FPPKIISTEV (156 aa)) is the PPIase cyclophilin-type domain. The disordered stretch occupies residues 224–275 (VKKPLRQKTPVSRSSDTTTELSKDLISSSSSIHSTYSSAQTGLTSAKVSSDE). The span at 232-243 (TPVSRSSDTTTE) shows a compositional bias: polar residues. Residues 250-261 (SSSSSIHSTYSS) show a composition bias toward low complexity. Over residues 262 to 271 (AQTGLTSAKV) the composition is skewed to polar residues.

It belongs to the cyclophilin-type PPIase family. CWC27 subfamily. In terms of assembly, belongs to the 40S cdc5-associated complex (or cwf complex), a spliceosome sub-complex reminiscent of a late-stage spliceosome composed of the U2, U5 and U6 snRNAs and at least brr2, cdc5, cwf2/prp3, cwf3/syf1, cwf4/syf3, cwf5/ecm2, spp42/cwf6, cwf7/spf27, cwf8, cwf9, cwf10, cwf11, cwf12, prp45/cwf13, cwf14, cwf15, cwf16, cwf17, cwf18, cwf19, cwf20, cwf21, cwf22, cwf23, cwf24, cwf25, cwf26, cyp7/cwf27, cwf28, cwf29/ist3, lea1, msl1, prp5/cwf1, prp10, prp12/sap130, prp17, prp22, sap61, sap62, sap114, sap145, slu7, smb1, smd1, smd3, smf1, smg1 and syf2.

The protein localises to the cytoplasm. Its subcellular location is the nucleus. The enzyme catalyses [protein]-peptidylproline (omega=180) = [protein]-peptidylproline (omega=0). PPIases accelerate the folding of proteins. Catalyzes the cis-trans isomerization of proline imidic peptide bonds in oligopeptides. Involved in pre-mRNA splicing. The sequence is that of Peptidylprolyl isomerase cyp7 (cyp7) from Schizosaccharomyces pombe (strain 972 / ATCC 24843) (Fission yeast).